A 250-amino-acid polypeptide reads, in one-letter code: GILT-like protein 1 (250 aa).

The first 21 residues, 1–21, serve as a signal peptide directing secretion; the sequence is MSHKIAAVCLLMSCLIATAYS. The N-linked (GlcNAc...) asparagine glycan is linked to Asn-157.

The protein belongs to the GILT family. Conjugated to URM1, a ubiquitin-like protein.

It localises to the secreted. Involved in the immune response to bacterial infection. In Drosophila melanogaster (Fruit fly), this protein is GILT-like protein 1.